We begin with the raw amino-acid sequence, 538 residues long: Phosphoenolpyruvate carboxykinase (ATP) (538 aa).

Position 64 (Arg-64) interacts with substrate. Ca(2+) is bound by residues Asn-149 and Phe-151. Positions 206 and 212 each coordinate substrate. Residues Lys-212, His-231, and 247 to 255 contribute to the ATP site; that span reads GLSGTGKTT. 2 residues coordinate Mn(2+): Lys-212 and His-231. Residue Asp-268 participates in Mn(2+) binding. ATP is bound by residues Glu-296, Arg-332, 447 to 448, and Thr-453; that span reads RI. Residue Arg-332 participates in substrate binding.

This sequence belongs to the phosphoenolpyruvate carboxykinase (ATP) family. Monomer. The cofactor is Mn(2+).

Its subcellular location is the cytoplasm. It catalyses the reaction oxaloacetate + ATP = phosphoenolpyruvate + ADP + CO2. The protein operates within carbohydrate biosynthesis; gluconeogenesis. Its activity is regulated as follows. Allosterically activated by calcium. Functionally, involved in the gluconeogenesis. Catalyzes the conversion of oxaloacetate (OAA) to phosphoenolpyruvate (PEP) through direct phosphoryl transfer between the nucleoside triphosphate and OAA. This Salmonella typhimurium (strain LT2 / SGSC1412 / ATCC 700720) protein is Phosphoenolpyruvate carboxykinase (ATP).